Reading from the N-terminus, the 164-residue chain is Translation initiation factor IF-3 (164 aa).

The protein belongs to the IF-3 family. As to quaternary structure, monomer.

It is found in the cytoplasm. Its function is as follows. IF-3 binds to the 30S ribosomal subunit and shifts the equilibrium between 70S ribosomes and their 50S and 30S subunits in favor of the free subunits, thus enhancing the availability of 30S subunits on which protein synthesis initiation begins. This is Translation initiation factor IF-3 from Bordetella bronchiseptica (strain ATCC BAA-588 / NCTC 13252 / RB50) (Alcaligenes bronchisepticus).